Consider the following 139-residue polypeptide: Transcription factor E (139 aa).

The 85-residue stretch at 7-91 (IINKKQDEVS…DYEKILDTLL (85 aa)) folds into the HTH TFE/IIEalpha-type domain.

It belongs to the TFE family. In terms of assembly, monomer. Interaction with RNA polymerase subunits RpoF and RpoE is necessary for Tfe stimulatory transcription activity. Able to interact with Tbp and RNA polymerase in the absence of DNA promoter. Interacts both with the preinitiation and elongation complexes.

Transcription factor that plays a role in the activation of archaeal genes transcribed by RNA polymerase. Facilitates transcription initiation by enhancing TATA-box recognition by TATA-box-binding protein (Tbp), and transcription factor B (Tfb) and RNA polymerase recruitment. Not absolutely required for transcription in vitro, but particularly important in cases where Tbp or Tfb function is not optimal. It dynamically alters the nucleic acid-binding properties of RNA polymerases by stabilizing the initiation complex and destabilizing elongation complexes. Seems to translocate with the RNA polymerase following initiation and acts by binding to the non template strand of the transcription bubble in elongation complexes. This chain is Transcription factor E, found in Nanoarchaeum equitans (strain Kin4-M).